The following is a 176-amino-acid chain: 2-C-methyl-D-erythritol 2,4-cyclodiphosphate synthase (176 aa).

Positions 23, 25, and 60 each coordinate a divalent metal cation. 23–25 provides a ligand contact to 4-CDP-2-C-methyl-D-erythritol 2-phosphate; it reads DSH. Residue 149 to 152 coordinates 4-CDP-2-C-methyl-D-erythritol 2-phosphate; the sequence is TSGE.

Belongs to the IspF family. In terms of assembly, homotrimer. A divalent metal cation is required as a cofactor.

The catalysed reaction is 4-CDP-2-C-methyl-D-erythritol 2-phosphate = 2-C-methyl-D-erythritol 2,4-cyclic diphosphate + CMP. It functions in the pathway isoprenoid biosynthesis; isopentenyl diphosphate biosynthesis via DXP pathway; isopentenyl diphosphate from 1-deoxy-D-xylulose 5-phosphate: step 4/6. Involved in the biosynthesis of isopentenyl diphosphate (IPP) and dimethylallyl diphosphate (DMAPP), two major building blocks of isoprenoid compounds. Catalyzes the conversion of 4-diphosphocytidyl-2-C-methyl-D-erythritol 2-phosphate (CDP-ME2P) to 2-C-methyl-D-erythritol 2,4-cyclodiphosphate (ME-CPP) with a corresponding release of cytidine 5-monophosphate (CMP). This Chlamydia felis (strain Fe/C-56) (Chlamydophila felis) protein is 2-C-methyl-D-erythritol 2,4-cyclodiphosphate synthase.